We begin with the raw amino-acid sequence, 156 residues long: Flagellar assembly factor FliW (156 aa).

Belongs to the FliW family. In terms of assembly, interacts with translational regulator CsrA and flagellin(s).

The protein localises to the cytoplasm. Its function is as follows. Acts as an anti-CsrA protein, binds CsrA and prevents it from repressing translation of its target genes, one of which is flagellin. Binds to flagellin and participates in the assembly of the flagellum. The protein is Flagellar assembly factor FliW of Lachnoclostridium phytofermentans (strain ATCC 700394 / DSM 18823 / ISDg) (Clostridium phytofermentans).